We begin with the raw amino-acid sequence, 274 residues long: Syntaxin-12 (274 aa).

The interval 1-20 is disordered; sequence MSYGPLDMYRNPGPSGPQPR. An N-acetylserine modification is found at serine 2. The Cytoplasmic portion of the chain corresponds to 2-250; it reads SYGPLDMYRN…AYYQKKSRKK (249 aa). A coiled-coil region spans residues 34–80; it reads QRISQATAQIKNLMSQLGTKQDSSKLQENLQQFQHSTNQLAKETNEL. The segment at 128-150 is disordered; it reads EKESIARARAGSRLSAEDRQREE. Residues serine 139, serine 142, serine 218, and serine 225 each carry the phosphoserine modification. The region spanning 178 to 240 is the t-SNARE coiled-coil homology domain; the sequence is LELIKERETA…ERASDQLQRA (63 aa). Residues 251–271 form a helical; Anchor for type IV membrane protein membrane-spanning segment; that stretch reads MCILVLVLSVIVTVLVVVIWV. Topologically, residues 272 to 274 are vesicular; sequence ASK.

Belongs to the syntaxin family. Associates with the BLOC-1 complex. Interacts with BLOC1S6. Interacts with NAPA and SNAP23. Identified in a complex containing STX6, STX12, VAMP4 and VTI1A. Interacts with GRIPAP1. Forms a complex with GRIP1, GRIA2 and NSG1; controls the intracellular fate of AMPAR and the endosomal sorting of the GRIA2 subunit toward recycling and membrane targeting. Interacts with NSG1. Interacts with TPC1. Interacts (via N-terminus) with VPS13B. As to expression, ubiquitous. Highly expressed in brain.

The protein localises to the endosome membrane. It localises to the golgi apparatus membrane. Its subcellular location is the endomembrane system. It is found in the early endosome membrane. The protein resides in the recycling endosome membrane. Its function is as follows. SNARE promoting fusion of transport vesicles with target membranes. Together with SNARE STX6, promotes movement of vesicles from endosomes to the cell membrane, and may therefore function in the endocytic recycling pathway. Through complex formation with GRIP1, GRIA2 and NSG1 controls the intracellular fate of AMPAR and the endosomal sorting of the GRIA2 subunit toward recycling and membrane targeting. The polypeptide is Syntaxin-12 (Stx12) (Rattus norvegicus (Rat)).